A 228-amino-acid chain; its full sequence is Death domain-containing membrane protein NRADD (228 aa).

The Extracellular portion of the chain corresponds to 1-52 (MLHNVSKGVVYSDTALKGQDGDREGMWVGAGGALAPNTSSLFPPEPPGASSN). N-linked (GlcNAc...) asparagine glycosylation is found at Asn-4 and Asn-37. Residues 53-73 (IIPVYCALLATVVLGLLAYVA) form a helical; Signal-anchor for type III membrane protein membrane-spanning segment. Residues 74 to 228 (FKCWRSRKQR…SSPAEGCSVV (155 aa)) are Cytoplasmic-facing. Residues 143-222 (EEVQRLLILG…DVVQVLSSPA (80 aa)) enclose the Death domain.

In terms of assembly, interacts with NTRK1. Isoform 1 and isoform 2 interact with NGFR. Interacts with SORT1. In terms of processing, isoform 1 is N-glycosylated. Isoform 2 is not N-glycosylated. Detected in embryo, including embryonic brain. Detected at very low levels in adult testis, spleen, thymus and lung.

It is found in the cell membrane. It localises to the nucleus. Modulates NTRK1 signaling. Can activate several intracellular signaling pathways, leading to activation of JUN. Promotes translocation of SORT1 to the cell membrane, and thereby hinders lysosomal degradation of SOTR1 and promotes its interaction with NGFR. Both isoform 1 and isoform 2 promote apoptosis. This Rattus norvegicus (Rat) protein is Death domain-containing membrane protein NRADD (Nradd).